Reading from the N-terminus, the 494-residue chain is Cytochrome P450 2G1 (494 aa).

Heme is bound at residue cysteine 439.

The protein belongs to the cytochrome P450 family. Requires heme as cofactor. In terms of tissue distribution, olfactory epithelium.

It is found in the endoplasmic reticulum membrane. The protein resides in the microsome membrane. It catalyses the reaction an organic molecule + reduced [NADPH--hemoprotein reductase] + O2 = an alcohol + oxidized [NADPH--hemoprotein reductase] + H2O + H(+). In terms of biological role, cytochromes P450 are a group of heme-thiolate monooxygenases. This isozyme seems to be implicated in olfaction. The sequence is that of Cytochrome P450 2G1 (CYP2G1) from Oryctolagus cuniculus (Rabbit).